Consider the following 433-residue polypeptide: MSVFKGEVTSLPPDKSISHRAALIASLSDGETEIMNFSAGFDNQSTLGVLQACGIPVRQEEVPGPWGTAILRVVIKSKGLWSLTPPSAPLQCNNSGSTMRMFSGILAGQPFQSELVGDASLLKRPMRRIADPLIQMGAGVSLSPIGTAPVVITGSKDLHAIDYRLPVASAQVKSLVAFAGLHAEGETRIYEPLSSRNHTELMLGLEPRVENEERVIVVPGRRQREARPFQIPADPSAACFIVSLGLLARGSEIMIRDVCLNPTRAAFLDILIRAGAAVTIENRRTVGGESIGDILVEGTRDMEPLVISDPQEVAIAIDELPMLGVLSAFATERFELMNAGELRTKESDRIEALALNLERLGFVCHQEPGGLSVTGRKGRPSGPVVVECFDDHRIAMSFAVASKACGEDIELSDREVAGVSFPNFFSLLDALEV.

3-phosphoshikimate-binding residues include Lys15, Ser16, and Arg20. Lys15 provides a ligand contact to phosphoenolpyruvate. Phosphoenolpyruvate contacts are provided by Gly96 and Arg124. 5 residues coordinate 3-phosphoshikimate: Ser169, Gln171, Ser195, Asp318, and Lys345. Gln171 is a binding site for phosphoenolpyruvate. Asp318 serves as the catalytic Proton acceptor. Residues Arg349 and Arg393 each contribute to the phosphoenolpyruvate site.

This sequence belongs to the EPSP synthase family. As to quaternary structure, monomer.

It is found in the cytoplasm. The enzyme catalyses 3-phosphoshikimate + phosphoenolpyruvate = 5-O-(1-carboxyvinyl)-3-phosphoshikimate + phosphate. It functions in the pathway metabolic intermediate biosynthesis; chorismate biosynthesis; chorismate from D-erythrose 4-phosphate and phosphoenolpyruvate: step 6/7. In terms of biological role, catalyzes the transfer of the enolpyruvyl moiety of phosphoenolpyruvate (PEP) to the 5-hydroxyl of shikimate-3-phosphate (S3P) to produce enolpyruvyl shikimate-3-phosphate and inorganic phosphate. This is 3-phosphoshikimate 1-carboxyvinyltransferase from Chlorobium luteolum (strain DSM 273 / BCRC 81028 / 2530) (Pelodictyon luteolum).